A 290-amino-acid chain; its full sequence is 33 kDa chaperonin (290 aa).

2 disulfide bridges follow: Cys-235–Cys-237 and Cys-268–Cys-271.

This sequence belongs to the HSP33 family. Post-translationally, under oxidizing conditions two disulfide bonds are formed involving the reactive cysteines. Under reducing conditions zinc is bound to the reactive cysteines and the protein is inactive.

The protein localises to the cytoplasm. Redox regulated molecular chaperone. Protects both thermally unfolding and oxidatively damaged proteins from irreversible aggregation. Plays an important role in the bacterial defense system toward oxidative stress. The protein is 33 kDa chaperonin of Streptococcus pyogenes serotype M49.